The following is a 125-amino-acid chain: Interferon-induced transmembrane protein 1 (125 aa).

The Cytoplasmic segment spans residues 1–36; that stretch reads MHKEEHEVAVLGPPPSTILPRSTVINIHSETSVPDH. Serine 16 is subject to Phosphoserine. An intramembrane region (helical) is located at residues 37–57; sequence VVWSLFNTLFLNWCCLGFIAF. 3 S-palmitoyl cysteine lipidation sites follow: cysteine 50, cysteine 51, and cysteine 84. Residues 58-86 are Cytoplasmic-facing; the sequence is AYSVKSRDRKMVGDVTGAQAYASTAKCLN. The tract at residues 84-125 is interaction with CAV1; it reads CLNIWALILGILMTIGFILLLVFGSVTVYHIMLQIIQEKRGY. Residues 87 to 107 form a helical membrane-spanning segment; the sequence is IWALILGILMTIGFILLLVFG. Over 108 to 125 the chain is Extracellular; that stretch reads SVTVYHIMLQIIQEKRGY.

The protein belongs to the CD225/Dispanin family. As to quaternary structure, interacts with CD81. Part of a complex composed of CD19, CR2/CD21, CD81 and IFITM1/CD225 in the membrane of mature B-cells. Interacts with CAV1; this interaction enhances the ability of CAV1 in inhibiting ERK activation. Post-translationally, palmitoylation on membrane-proximal cysteines controls clustering in membrane compartments and antiviral activity. As to expression, bone (at protein level). Levels greatly elevated in colon cancer, cervical cancer, esophageal cancer and ovarian cancer. Expressed in glioma cell lines.

The protein localises to the cell membrane. The protein resides in the lysosome membrane. Its function is as follows. IFN-induced antiviral protein which inhibits the entry of viruses to the host cell cytoplasm, permitting endocytosis, but preventing subsequent viral fusion and release of viral contents into the cytosol. Active against multiple viruses, including influenza A virus, SARS coronaviruses (SARS-CoV and SARS-CoV-2), Marburg virus (MARV), Ebola virus (EBOV), Dengue virus (DNV), West Nile virus (WNV), human immunodeficiency virus type 1 (HIV-1) and hepatitis C virus (HCV). Can inhibit: influenza virus hemagglutinin protein-mediated viral entry, MARV and EBOV GP1,2-mediated viral entry and SARS-CoV and SARS-CoV-2 S protein-mediated viral entry. Also implicated in cell adhesion and control of cell growth and migration. Inhibits SARS-CoV-2 S protein-mediated syncytia formation. Plays a key role in the antiproliferative action of IFN-gamma either by inhibiting the ERK activation or by arresting cell growth in G1 phase in a p53-dependent manner. Acts as a positive regulator of osteoblast differentiation. In hepatocytes, IFITM proteins act in a coordinated manner to restrict HCV infection by targeting the endocytosed HCV virion for lysosomal degradation. IFITM2 and IFITM3 display anti-HCV activity that may complement the anti-HCV activity of IFITM1 by inhibiting the late stages of HCV entry, possibly in a coordinated manner by trapping the virion in the endosomal pathway and targeting it for degradation at the lysosome. The protein is Interferon-induced transmembrane protein 1 of Homo sapiens (Human).